A 375-amino-acid polypeptide reads, in one-letter code: Phosphoribulokinase, chloroplastic (375 aa).

A chloroplast-targeting transit peptide spans 1–31 (MAFTMRAPAPRATAQSRVTANRARRSLVVRA). A disulfide bridge connects residues C47 and C86.

This sequence belongs to the phosphoribulokinase family. As to quaternary structure, component of a complex that contains two dimers of PRK, two tetramers of GAPDH and CP12.

The protein resides in the plastid. Its subcellular location is the chloroplast. It catalyses the reaction D-ribulose 5-phosphate + ATP = D-ribulose 1,5-bisphosphate + ADP + H(+). The protein operates within carbohydrate biosynthesis; Calvin cycle. With respect to regulation, light regulated via thioredoxin by reversible oxidation/reduction of sulfhydryl/disulfide groups. This chain is Phosphoribulokinase, chloroplastic (PRKA), found in Chlamydomonas reinhardtii (Chlamydomonas smithii).